Reading from the N-terminus, the 177-residue chain is Probetacellulin (177 aa).

The N-terminal stretch at 1–31 (MDPTAPGSSVSSLPLLLVLALGLAILHCVVA) is a signal peptide. Residues 32–118 (DGNTTRTPET…LFYLQQDRGQ (87 aa)) lie on the Extracellular side of the membrane. N-linked (GlcNAc...) asparagine glycans are attached at residues Asn34, Asn42, and Asn52. Positions 65-105 (HFSRCPKQYKHYCIHGRCRFVVDEQTPSCICEKGYFGARCE) constitute an EGF-like domain. 3 disulfide bridges follow: Cys69–Cys82, Cys77–Cys93, and Cys95–Cys104. Positions 112-177 (LQQDRGQILV…SEDIQETNIA (66 aa)) are cleaved as a propeptide — removed in mature form. The helical transmembrane segment at 119 to 139 (ILVVCLIVVMVVFIILVIGVC) threads the bilayer. At 140 to 177 (TCCHPLRKHRKKKKEEKMETLDKDKTPISEDIQETNIA) the chain is on the cytoplasmic side. Residues 153–177 (KEEKMETLDKDKTPISEDIQETNIA) are disordered. Residues 154–167 (EEKMETLDKDKTPI) are compositionally biased toward basic and acidic residues.

As to quaternary structure, monomer. Interacts with EGFR and ERBB4. In terms of tissue distribution, found in several mouse tissues including kidney, uterus and liver, as well as in beta tumor cell line and MCF-7 cells. It is not detected in the brain.

Its subcellular location is the secreted. It is found in the extracellular space. The protein localises to the cell membrane. In terms of biological role, growth factor that binds to EGFR, ERBB4 and other EGF receptor family members. Potent mitogen for retinal pigment epithelial cells and vascular smooth muscle cells. This chain is Probetacellulin (Btc), found in Mus musculus (Mouse).